The primary structure comprises 284 residues: uncharacterized protein (284 aa).

The helical transmembrane segment at 9 to 28 (IILRWVVTLYIYGFILYQIT) threads the bilayer.

The protein localises to the membrane. This is an uncharacterized protein from Aquifex aeolicus (strain VF5).